The primary structure comprises 309 residues: Ribonuclease Z (309 aa).

Residues H63, H65, D67, H68, H145, D216, and H274 each coordinate Zn(2+). The Proton acceptor role is filled by D67.

Belongs to the RNase Z family. In terms of assembly, homodimer. The cofactor is Zn(2+).

It carries out the reaction Endonucleolytic cleavage of RNA, removing extra 3' nucleotides from tRNA precursor, generating 3' termini of tRNAs. A 3'-hydroxy group is left at the tRNA terminus and a 5'-phosphoryl group is left at the trailer molecule.. In terms of biological role, zinc phosphodiesterase, which displays some tRNA 3'-processing endonuclease activity. Probably involved in tRNA maturation, by removing a 3'-trailer from precursor tRNA. The sequence is that of Ribonuclease Z from Streptococcus pneumoniae serotype 2 (strain D39 / NCTC 7466).